A 318-amino-acid chain; its full sequence is Ribokinase (318 aa).

Residues 11 to 13 (NTD), 41 to 45 (GKGAN), and glutamate 146 contribute to the substrate site. Residues asparagine 190 and 229 to 234 (TLGSQG) each bind ATP. K(+) is bound by residues aspartate 256 and threonine 258. 261–262 (GD) is a binding site for ATP. A substrate-binding site is contributed by aspartate 262. Aspartate 262 (proton acceptor) is an active-site residue. K(+)-binding residues include threonine 292, arginine 295, glycine 297, and serine 301.

The protein belongs to the carbohydrate kinase PfkB family. Ribokinase subfamily. As to quaternary structure, homodimer. The cofactor is Mg(2+).

It is found in the cytoplasm. It localises to the nucleus. The enzyme catalyses D-ribose + ATP = D-ribose 5-phosphate + ADP + H(+). The protein operates within carbohydrate metabolism; D-ribose degradation; D-ribose 5-phosphate from beta-D-ribopyranose: step 2/2. With respect to regulation, activated by a monovalent cation that binds near, but not in, the active site. The most likely occupant of the site in vivo is potassium. Ion binding induces a conformational change that may alter substrate affinity. Functionally, catalyzes the phosphorylation of ribose at O-5 in a reaction requiring ATP and magnesium. The resulting D-ribose-5-phosphate can then be used either for sythesis of nucleotides, histidine, and tryptophan, or as a component of the pentose phosphate pathway. The polypeptide is Ribokinase (Schizosaccharomyces pombe (strain 972 / ATCC 24843) (Fission yeast)).